A 116-amino-acid chain; its full sequence is Large ribosomal subunit protein bL19 (116 aa).

This sequence belongs to the bacterial ribosomal protein bL19 family.

Functionally, this protein is located at the 30S-50S ribosomal subunit interface and may play a role in the structure and function of the aminoacyl-tRNA binding site. The protein is Large ribosomal subunit protein bL19 of Shewanella loihica (strain ATCC BAA-1088 / PV-4).